Here is a 236-residue protein sequence, read N- to C-terminus: MAPDPWFSTYDSTCQIAQEIAEKIQQRNQYERNGENTTKLTVTIRALLQKLKEKIALLKDLLLRAVATHQITQLEGDRRQNLLDDLVTRERLLLASFKNEGAEPDLIRSSLMTGGAKRGAPNPWLLEEPEETRGLGFDEIRQQQQKIIQEQDAGLDALSSIISRQKQMGQEIGNELDEQNEIIDDLANLVENTDEKLRTETRRVNLVDRKSTSCGMIMVILLLLVAIVVVAVWPTK.

Topologically, residues 1 to 215 (MAPDPWFSTY…LVDRKSTSCG (215 aa)) are cytoplasmic. Positions 42 to 65 (VTIRALLQKLKEKIALLKDLLLRA) form a coiled coil. In terms of domain architecture, t-SNARE coiled-coil homology spans 145-207 (QKIIQEQDAG…RTETRRVNLV (63 aa)). S160 carries the post-translational modification Phosphoserine. The helical; Anchor for type IV membrane protein transmembrane segment at 216–232 (MIMVILLLLVAIVVVAV) threads the bilayer. At 233-236 (WPTK) the chain is on the vesicular side.

It belongs to the syntaxin family. In terms of assembly, forms a SNARE complex with STX7, VTI1B and VAMP8 which functions in the homotypic fusion of late endosomes. Part of the SNARE core complex containing STX7, VAMP8 and VTI1B. Interacts with VAMP8. Interacts with HECTD3. Interacts with TPC1. Post-translationally, ubiquitinated by HECTD3.

Its subcellular location is the membrane. In terms of biological role, vesicle trafficking protein that functions in the early secretory pathway, possibly by mediating retrograde transport from cis-Golgi membranes to the ER. This chain is Syntaxin-8 (STX8), found in Bos taurus (Bovine).